Here is an 833-residue protein sequence, read N- to C-terminus: Protein translocase subunit SecA (833 aa).

ATP contacts are provided by residues Q87, 105–109 (GEGKT), and D494. Positions 789 to 816 (PAAVAYSGGEAEAGPAQPHREDPKVGRN) are disordered. Residues 806-815 (PHREDPKVGR) are compositionally biased toward basic and acidic residues. Zn(2+) contacts are provided by C819, C821, C830, and C831.

Belongs to the SecA family. In terms of assembly, monomer and homodimer. Part of the essential Sec protein translocation apparatus which comprises SecA, SecYEG and auxiliary proteins SecDF-YajC and YidC. Zn(2+) serves as cofactor.

The protein localises to the cell inner membrane. It localises to the cytoplasm. It carries out the reaction ATP + H2O + cellular proteinSide 1 = ADP + phosphate + cellular proteinSide 2.. Part of the Sec protein translocase complex. Interacts with the SecYEG preprotein conducting channel. Has a central role in coupling the hydrolysis of ATP to the transfer of proteins into and across the cell membrane, serving as an ATP-driven molecular motor driving the stepwise translocation of polypeptide chains across the membrane. This chain is Protein translocase subunit SecA, found in Nitratidesulfovibrio vulgaris (strain DP4) (Desulfovibrio vulgaris).